Reading from the N-terminus, the 292-residue chain is Protein PHR1-LIKE 3 (292 aa).

The HTH myb-type domain maps to T34–Q94. A DNA-binding region (H-T-H motif) is located at residues P65 to R90. Residues T137 to Q157 adopt a coiled-coil conformation. The short motif at L150–E155 is the LHEQLE element.

Belongs to the MYB-CC family. As to quaternary structure, homo- and heterodimers. Interacts with PHL2, but not with PHR1.

Its subcellular location is the nucleus. Transcriptional activator. Probable component of the central regulatory system controlling transcriptional responses to Pi starvation. Binds in a sequence-specific manner to phosphate starvation-regulated promoters. Required for female gametophyte development and function. The chain is Protein PHR1-LIKE 3 from Arabidopsis thaliana (Mouse-ear cress).